Consider the following 314-residue polypeptide: Thymidylate synthase (314 aa).

DUMP-binding positions include Arg-21 and 176 to 177 (RR). The active-site Nucleophile is the Cys-196. DUMP-binding positions include 216–219 (RSAD), Asn-227, and 257–259 (HLY). Asp-219 contributes to the (6R)-5,10-methylene-5,6,7,8-tetrahydrofolate binding site. Ser-313 is a (6R)-5,10-methylene-5,6,7,8-tetrahydrofolate binding site.

It belongs to the thymidylate synthase family. Bacterial-type ThyA subfamily. Homodimer.

It localises to the cytoplasm. The catalysed reaction is dUMP + (6R)-5,10-methylene-5,6,7,8-tetrahydrofolate = 7,8-dihydrofolate + dTMP. It participates in pyrimidine metabolism; dTTP biosynthesis. In terms of biological role, catalyzes the reductive methylation of 2'-deoxyuridine-5'-monophosphate (dUMP) to 2'-deoxythymidine-5'-monophosphate (dTMP) while utilizing 5,10-methylenetetrahydrofolate (mTHF) as the methyl donor and reductant in the reaction, yielding dihydrofolate (DHF) as a by-product. This enzymatic reaction provides an intracellular de novo source of dTMP, an essential precursor for DNA biosynthesis. The sequence is that of Thymidylate synthase from Listeria innocua serovar 6a (strain ATCC BAA-680 / CLIP 11262).